The chain runs to 252 residues: Trans-aconitate 2-methyltransferase (252 aa).

Belongs to the methyltransferase superfamily. Tam family.

Its subcellular location is the cytoplasm. It catalyses the reaction trans-aconitate + S-adenosyl-L-methionine = (E)-3-(methoxycarbonyl)pent-2-enedioate + S-adenosyl-L-homocysteine. Catalyzes the S-adenosylmethionine monomethyl esterification of trans-aconitate. The chain is Trans-aconitate 2-methyltransferase from Escherichia coli O9:H4 (strain HS).